The primary structure comprises 251 residues: uncharacterized protein (251 aa).

Positions 3-118 (KVVICDDERI…QLEHILDILV (116 aa)) constitute a Response regulatory domain. Asp55 bears the 4-aspartylphosphate mark. The HTH araC/xylS-type domain maps to 152–249 (NQILSQIKQH…HMSPSDYNKL (98 aa)). 2 DNA-binding regions (H-T-H motif) span residues 169-190 (LDLI…KEHV) and 216-239 (HYEI…KKYL).

Phosphorylated by SE_0166.

Its subcellular location is the cytoplasm. Probable member of the two-component regulatory system SE_0166/SE_0165. This is an uncharacterized protein from Staphylococcus epidermidis (strain ATCC 12228 / FDA PCI 1200).